A 362-amino-acid polypeptide reads, in one-letter code: L-asparaginase 2-1 (362 aa).

The first 25 residues, 1–25 (MRSLNTLLLSLFVAMSSGAPLLKIR), serve as a signal peptide directing secretion. N-linked (GlcNAc...) asparagine glycosylation occurs at N29. The Asparaginase/glutaminase domain occupies 33-359 (PSIKIFGTGG…DQIRSVFSGV (327 aa)). T43 functions as the O-isoaspartyl threonine intermediate in the catalytic mechanism. S89 is a binding site for substrate. N93 carries N-linked (GlcNAc...) asparagine glycosylation. Residue 122–123 (TD) coordinates substrate. A glycan (N-linked (GlcNAc...) asparagine) is linked at N239.

It belongs to the asparaginase 1 family.

It is found in the secreted. Its subcellular location is the periplasm. The enzyme catalyses L-asparagine + H2O = L-aspartate + NH4(+). This chain is L-asparaginase 2-1 (ASP3-1), found in Saccharomyces cerevisiae (strain ATCC 204508 / S288c) (Baker's yeast).